A 190-amino-acid polypeptide reads, in one-letter code: GTP cyclohydrolase 1 (190 aa).

Residues Cys-75, His-78, and Cys-146 each contribute to the Zn(2+) site.

The protein belongs to the GTP cyclohydrolase I family. Toroid-shaped homodecamer, composed of two pentamers of five dimers.

The catalysed reaction is GTP + H2O = 7,8-dihydroneopterin 3'-triphosphate + formate + H(+). Its pathway is cofactor biosynthesis; 7,8-dihydroneopterin triphosphate biosynthesis; 7,8-dihydroneopterin triphosphate from GTP: step 1/1. This is GTP cyclohydrolase 1 from Campylobacter curvus (strain 525.92).